We begin with the raw amino-acid sequence, 913 residues long: Zinc finger protein 112 (913 aa).

Positions 8-79 constitute a KRAB domain; sequence VTFKDVAVVF…ETETPRDGCS (72 aa). Residue Lys256 forms a Glycyl lysine isopeptide (Lys-Gly) (interchain with G-Cter in SUMO2) linkage. The C2H2-type 1; degenerate zinc finger occupies 258–280; that stretch reads YPCTGYRKAFSNDSSSEVHQQFH. The C2H2-type 2; degenerate zinc-finger motif lies at 443–465; sequence YNSEECGNGFSLASHFQDLQIVH. The C2H2-type 3; degenerate zinc finger occupies 471–493; the sequence is YKRYVCSNSFSHNLYLQGHPKIH. A C2H2-type 4; degenerate zinc finger spans residues 497 to 519; the sequence is KPRKEHGNGFNWSSKLKDHQRVH. C2H2-type zinc fingers lie at residues 525–547, 553–575, 581–603, 609–631, 637–659, 665–687, 693–715, 721–743, 749–771, 777–799, 805–827, 833–855, and 861–883; these read YKCNICGKGFNHRSVLNVHQRVH, YKCEECDKGFSRSSYLQAHQRVH, YKCEECGKGFSRNSYLQGHQRVH, YKCEECGKGFSRSSHLQGHQRVH, FKCEECGKGFSWSFNLQIHQRVH, YKCEECGKGFSKASTLLAHQRVH, YQCDECGKSFSQRSYLQSHQSVH, YICEVCGKGFSQRAYLQGHQRVH, YKCEMCGKGFSQSSRLEAHRRVH, YKCEVCTKGFSESSRLQAHQRVH, YKCEQCGKGFSGYSSLQAHHRVH, YKCEVCGKGFSQRSNLQAHQRVH, and YKCDACGKGFRWSSGLLIHQRVH. Lys890 is covalently cross-linked (Glycyl lysine isopeptide (Lys-Gly) (interchain with G-Cter in SUMO2)).

Belongs to the krueppel C2H2-type zinc-finger protein family.

It is found in the nucleus. Functionally, may be involved in transcriptional regulation. This Homo sapiens (Human) protein is Zinc finger protein 112 (ZNF112).